A 1404-amino-acid chain; its full sequence is DNA-directed RNA polymerase subunit beta' (1404 aa).

Zn(2+) contacts are provided by C70, C72, C85, and C88. 3 residues coordinate Mg(2+): D460, D462, and D464. Positions 814, 888, 895, and 898 each coordinate Zn(2+).

This sequence belongs to the RNA polymerase beta' chain family. As to quaternary structure, the RNAP catalytic core consists of 2 alpha, 1 beta, 1 beta' and 1 omega subunit. When a sigma factor is associated with the core the holoenzyme is formed, which can initiate transcription. Mg(2+) serves as cofactor. Requires Zn(2+) as cofactor.

It carries out the reaction RNA(n) + a ribonucleoside 5'-triphosphate = RNA(n+1) + diphosphate. Functionally, DNA-dependent RNA polymerase catalyzes the transcription of DNA into RNA using the four ribonucleoside triphosphates as substrates. The polypeptide is DNA-directed RNA polymerase subunit beta' (Shewanella amazonensis (strain ATCC BAA-1098 / SB2B)).